Consider the following 4043-residue polypeptide: Polyketide synthase-nonribosomal peptide synthetase (4043 aa).

One can recognise a Ketosynthase family 3 (KS3) domain in the interval 8-446 (SEPIAIIGTG…GANSHAILES (439 aa)). Catalysis depends on for beta-ketoacyl synthase activity residues C181, H320, and H366. Residues 557-877 (VFTGQGAQWA…SRGNSDVEAF (321 aa)) are acyl transferase. The interval 944–1078 (NELLGRQVLD…CRLRITVGDS (135 aa)) is N-terminal hotdog fold. The 303-residue stretch at 944–1246 (NELLGRQVLD…TQPLSSPTEA (303 aa)) folds into the PKS/mFAS DH domain. The dehydratase (DH) domain stretch occupies residues 945–1243 (ELLGRQVLDG…GLQTQPLSSP (299 aa)). The active-site Proton acceptor; for dehydratase activity is the H976. The interval 1093 to 1246 (LLEVESDRFY…TQPLSSPTEA (154 aa)) is C-terminal hotdog fold. The active-site Proton donor; for dehydratase activity is the D1154. Residues 1400 to 1585 (RYTKYLAAMA…GIETAIPHHD (186 aa)) are methyltransferase (MT) domain. Residues 2115–2288 (TYWLVGLTGG…NASAVHIGAI (174 aa)) form a ketoreductase (KR)domain region. In terms of domain architecture, Carrier 1 spans 2394–2475 (SSSADIYDII…EMVTQAQELL (82 aa)). A peptidyl carrier protein region spans residues 2395-2472 (SSADIYDIIS…TVGEMVTQAQ (78 aa)). Residue S2435 is modified to O-(pantetheine 4'-phosphoryl)serine. Disordered stretches follow at residues 2476–2575 (PKEL…DPSR) and 2587–2630 (EKHL…SQII). Composition is skewed to polar residues over residues 2494 to 2512 (PKNTVQPKQQTKKTIQLQN) and 2520 to 2534 (ALSQQVSSGVQNMIK). Basic and acidic residues predominate over residues 2537–2550 (PPKEAEAKQPRPEV). Low complexity predominate over residues 2617–2627 (TSSSSSSTSAS). The condensation stretch occupies residues 2640–3069 (KSVPMAFGQS…NPALRLNVPP (430 aa)). The tract at residues 3102–3502 (EIVERYPTHV…EGNLILGGRI (401 aa)) is adenylation. In terms of domain architecture, Carrier 2 spans 3617 to 3697 (TDESPSMAKM…GMVSLIDHSE (81 aa)). The segment at 3622-3694 (SMAKMRDVWA…SLTGMVSLID (73 aa)) is thiolation. S3657 bears the O-(pantetheine 4'-phosphoryl)serine mark. Residues 3735-3954 (LTGATGFLGR…DFVSADRVAM (220 aa)) are reductase-like.

It in the C-terminal section; belongs to the NRP synthetase family.

The protein operates within mycotoxin biosynthesis. Its function is as follows. Hybrid PKS-NRPS synthetase; part of the gene cluster that mediates the biosynthesis of the mycotoxins cytochalasins E and K. The hybrid PKS-NRPS synthetase ccsA and the enoyl reductase ccsC are responsible for fusion of phenylalanine with an octaketide backbone and subsequent release of the stable tetramic acid precursor. The polyketide synthase module (PKS) of the PKS-NRPS ccsA is responsible for the synthesis of the octaketide backbone. The downstream nonribosomal peptide synthetase (NRPS) amidates the carboxyl end of the octaketide with a phenylalanine. A reductase-like domain (R) at the C-terminus catalyzes the reductive release of the polyketide-amino acid intermediate. Because ccsA lacks a designated enoylreductase (ER) domain, the required activity is provided the enoyl reductase ccsC. Upon formation of the 11-membered carbocycle-fused perhydroisoindolone intermediate, a number of oxidative steps are required to afford the final cytochalasin E and K, including two hydroxylations at C17 and C18, one alcohol oxidation at C17, one epoxidation at C6 and C7 and two Baeyer-Villiger oxidations. The oxidative modification at C17, C18 and the C6-C7 epoxidation are likely to be catalyzed by the two cytochrome P450 oxygenases ccsD and ccsG. CcsD may be responsible for the epoxidation of the C6-C7 double bond. CcsG may be responsible for the successive oxidative modifications at C17 and C18. The double Baeyer-Villiger oxidations of ketocytochalasin to precytochalasin and cytochalasin Z(16) are among the final steps leading to cytochalasin E and K and are catalyzed by ccsB. The first oxygen insertion step follows that of the classic BVMO mechanism, generating the ester precytochalasin. Release of precytochalasin into an aqueous environment can generate the shunt product iso-precytochalasin through spontaneous isomerization. Alternatively, precytochalasin can undergo further oxidation by ccsB to yield the in-line carbonate-containing cytochalasin Z(16). Cytochalasin Z(16) is a precursor to cytochalasin E and cytochalasin K, whereas iso-precytochalasin is a precursor to cytochalasin Z(17) and rosellichalasin. The hydrolyase ccsE may catalyze hydrolysis of epoxide bond in cytochalasin E to afford cytochalasin K. The function of ccsF has not been assigned but it may play a role in post-PKS-NRPS biosynthetic step, resistance or transport of cytochalasins and related PKS-NRPS products. In Aspergillus clavatus (strain ATCC 1007 / CBS 513.65 / DSM 816 / NCTC 3887 / NRRL 1 / QM 1276 / 107), this protein is Polyketide synthase-nonribosomal peptide synthetase.